Here is a 448-residue protein sequence, read N- to C-terminus: Protein chibby homolog 2 (448 aa).

A phosphoserine mark is found at serine 41, serine 86, serine 89, serine 97, serine 124, serine 144, serine 148, and serine 150. Residues 163–198 (AKEFVLQEENKSLREENKALREENRMLRKENKILQV) are a coiled coil. The segment at 206 to 226 (SLGREESRPPSPLPQKDSASL) is disordered. A phosphoserine mark is found at serine 212 and serine 225. Residues 242–267 (KEDSTLQLLREENRALQQLLEQKQAY) adopt a coiled-coil conformation. Residues 270–321 (QTEDAAAPAEESKPAPSPHEEPCSPGLLQDQGSGLSSHFEEPRGPPAPQEDS) are disordered. The segment covering 279–291 (EESKPAPSPHEEP) has biased composition (basic and acidic residues). Phosphoserine occurs at positions 335 and 338. Residues 356-414 (LQLLREMRQALQALLKENRLLQEENRTLQVLRAEHRGFQEENKALWENNKLKLQQKLVI) are a coiled coil.

The protein belongs to the chibby family. SPERT subfamily. Homodimer. Binds to NEK1.

The polypeptide is Protein chibby homolog 2 (CBY2) (Macaca fascicularis (Crab-eating macaque)).